A 52-amino-acid chain; its full sequence is Transcriptional regulator SlrA (52 aa).

The 38-residue stretch at 1–38 (MKTHVKKDLDKGWHMLIQEARSIGLGIHDVRQFLESET) folds into the Sin domain.

Component of the SlrR/SlrA complex.

In terms of biological role, required specifically for induction of eps and yqxM operons by antagonizing SinR. Regulates SlrR activity. Controls the initiation of biofilm formation. The protein is Transcriptional regulator SlrA (slrA) of Bacillus subtilis (strain 168).